A 215-amino-acid polypeptide reads, in one-letter code: Nascent polypeptide-associated complex subunit alpha (215 aa).

The disordered stretch occupies residues 1-81 (MPGEATETVP…SEKKARKAMS (81 aa)). Residues 9-28 (VPATEQELPQPQAETGSGTE) show a composition bias toward polar residues. Residues 29–42 (SDSDESVPELEEQD) show a composition bias toward acidic residues. A Phosphoserine; by ILK1 modification is found at Ser43. Residues 44 to 57 (TQTATQQAQLAAAA) show a composition bias toward low complexity. The tract at residues 69-80 (QSRSEKKARKAM) is required for DNA-binding. In terms of domain architecture, NAC-A/B spans 70 to 135 (SRSEKKARKA…AKIEDLSQQA (66 aa)). An RNA/DNA-binding region spans residues 93 to 108 (RVTIRKSKNILFVITK). A Phosphoserine modification is found at Ser132. Lys142 is subject to N6-acetyllysine; alternate. Residue Lys142 forms a Glycyl lysine isopeptide (Lys-Gly) (interchain with G-Cter in SUMO2); alternate linkage. Thr159 carries the post-translational modification Phosphothreonine; by GSK3-beta. Thr161 carries the post-translational modification Phosphothreonine. Residues Ser166, Ser186, Ser191, and Ser203 each carry the phosphoserine modification. Residues 176-213 (VEVKDIELVMSQANVSRAKAVRALKNNSNDIVNAIMEL) enclose the UBA domain.

It belongs to the NAC-alpha family. Part of the nascent polypeptide-associated complex (NAC), which is a heterodimer of NACA and BTF3 (via NAC-A/B domains). NAC associates with ribosomes through the BTF3/NACB subunit and contacts the ribosomal protein L23, which is positioned near the exiting site. Both subunits can contact nascent polypeptide chains. NACA may also form homodimers, and only this form binds DNA. Interacts with TBP and JUN. Post-translationally, phosphorylation of Ser-43 by ILK during cell adhesion may promote nuclear localization. Phosphorylation of Thr-159 by GSK3B may promote proteasome mediated degradation. In terms of tissue distribution, isoform 1 appears to be ubiquitously expressed.

It is found in the cytoplasm. Its subcellular location is the nucleus. Functionally, prevents inappropriate targeting of non-secretory polypeptides to the endoplasmic reticulum (ER). Binds to nascent polypeptide chains as they emerge from the ribosome and blocks their interaction with the signal recognition particle (SRP), which normally targets nascent secretory peptides to the ER. Also reduces the inherent affinity of ribosomes for protein translocation sites in the ER membrane (M sites). Isoform 1 and isoform 2 appear to bind DNA and play roles in transcription. Isoform 1 may function as a specific coactivator for JUN, acting to stabilize the interaction of JUN homodimers with promoter elements. This Mus musculus (Mouse) protein is Nascent polypeptide-associated complex subunit alpha (Naca).